The primary structure comprises 355 residues: dTDP-glucose 4,6-dehydratase (355 aa).

Residues 12-13 (FI), 33-36 (DKLT), 59-60 (DI), 81-85 (LAAES), and Thr-100 contribute to the NAD(+) site. Position 85 (Ser-85) interacts with substrate. Thr-134 provides a ligand contact to substrate. Asp-135 acts as the Proton donor in catalysis. Residues Glu-136 and Tyr-160 each act as proton acceptor in the active site. 160-164 (YSASK) serves as a coordination point for NAD(+). Asn-189 serves as a coordination point for substrate. Asn-190 is an NAD(+) binding site. Substrate is bound by residues 199-200 (KL), 215-217 (PVY), Arg-224, Asn-259, and 293-297 (DRPGH).

The protein belongs to the NAD(P)-dependent epimerase/dehydratase family. dTDP-glucose dehydratase subfamily. As to quaternary structure, homodimer. NAD(+) serves as cofactor.

It carries out the reaction dTDP-alpha-D-glucose = dTDP-4-dehydro-6-deoxy-alpha-D-glucose + H2O. The protein operates within carbohydrate biosynthesis; dTDP-L-rhamnose biosynthesis. It participates in bacterial outer membrane biogenesis; LPS O-antigen biosynthesis. In terms of biological role, catalyzes the dehydration of dTDP-D-glucose to form dTDP-6-deoxy-D-xylo-4-hexulose via a three-step process involving oxidation, dehydration and reduction. The polypeptide is dTDP-glucose 4,6-dehydratase (rfbB1) (Neisseria meningitidis serogroup B (strain ATCC BAA-335 / MC58)).